Consider the following 251-residue polypeptide: Ribosomal RNA small subunit methyltransferase J (251 aa).

S-adenosyl-L-methionine contacts are provided by residues 100–101 (RD), 116–117 (ER), and aspartate 170.

This sequence belongs to the methyltransferase superfamily. RsmJ family.

Its subcellular location is the cytoplasm. It carries out the reaction guanosine(1516) in 16S rRNA + S-adenosyl-L-methionine = N(2)-methylguanosine(1516) in 16S rRNA + S-adenosyl-L-homocysteine + H(+). Specifically methylates the guanosine in position 1516 of 16S rRNA. In Actinobacillus pleuropneumoniae serotype 5b (strain L20), this protein is Ribosomal RNA small subunit methyltransferase J.